The chain runs to 558 residues: Kelch-like protein 23 (558 aa).

In terms of domain architecture, BTB spans T36–E104. The BACK domain occupies C139 to G240. 6 Kelch repeats span residues T274–P320, N321–G369, C370–D416, I418–N466, K467–G508, and I510–N557.

This Pongo abelii (Sumatran orangutan) protein is Kelch-like protein 23 (KLHL23).